The following is a 184-amino-acid chain: Photosystem I assembly protein Ycf4 (184 aa).

Helical transmembrane passes span F22 to S42 and I57 to S77.

This sequence belongs to the Ycf4 family.

The protein resides in the plastid. It is found in the chloroplast thylakoid membrane. Seems to be required for the assembly of the photosystem I complex. The chain is Photosystem I assembly protein Ycf4 from Chloranthus spicatus (Chulantree).